The primary structure comprises 240 residues: Probable transcriptional regulatory protein VFMJ11_A0186 (240 aa).

The protein belongs to the TACO1 family.

The protein localises to the cytoplasm. The polypeptide is Probable transcriptional regulatory protein VFMJ11_A0186 (Aliivibrio fischeri (strain MJ11) (Vibrio fischeri)).